We begin with the raw amino-acid sequence, 121 residues long: MAFKHQLILSTAILLAVLAAASASFREQCVPGREITYESLNARREYAVRQTCGYYLSAERQKRRCCDELSKVPELCWCEVLRILMDRRVTKEGVVKGSLLQDMSRCKKLTREFIAGIVGRE.

Positions 1 to 24 (MAFKHQLILSTAILLAVLAAASAS) are cleaved as a signal peptide.

Belongs to the protease inhibitor I6 (cereal trypsin/alpha-amylase inhibitor) family.

The protein resides in the secreted. This chain is Trypsin/alpha-amylase inhibitor CMX1/CMX3, found in Triticum aestivum (Wheat).